The following is a 138-amino-acid chain: MKSITRRFARLCALQALYAWQLSKNDYTMISNYVIKIQNIQNFNISYFLTLYIGVIHTIKELNTLMIPYLSRGLKAIDYIEYSVLLIALFELTQCCDVPYKVVINEAIELAKIFGSEKSHKFINGVLDKIITEKLYKG.

The protein belongs to the NusB family.

Functionally, involved in transcription antitermination. Required for transcription of ribosomal RNA (rRNA) genes. Binds specifically to the boxA antiterminator sequence of the ribosomal RNA (rrn) operons. The polypeptide is Transcription antitermination protein NusB (Blochmanniella floridana).